A 47-amino-acid chain; its full sequence is Large ribosomal subunit protein eL40 (47 aa).

The protein belongs to the eukaryotic ribosomal protein eL40 family.

In Methanococcus vannielii (strain ATCC 35089 / DSM 1224 / JCM 13029 / OCM 148 / SB), this protein is Large ribosomal subunit protein eL40.